The following is a 367-amino-acid chain: Serine/threonine-protein kinase Sgk2 (367 aa).

The disordered stretch occupies residues 1–28 (MASSPVGVPSPQPSRANGNINLGPSANP). At Ser-10 the chain carries Phosphoserine. Over residues 15–28 (RANGNINLGPSANP) the composition is skewed to polar residues. One can recognise a Protein kinase domain in the interval 35 to 292 (FDFLKVIGKG…FLDIKNHMFF (258 aa)). ATP is bound by residues 41–49 (IGKGNYGKV) and Lys-64. The Nuclear localization signal motif lies at 68–77 (KKSILKNKEQ). The Proton acceptor role is filled by Asp-159. Thr-193 carries the phosphothreonine; by PDPK1 modification. One can recognise an AGC-kinase C-terminal domain in the interval 293-367 (SPINWDDLYH…AQDDDDILDS (75 aa)). Phosphoserine occurs at positions 334 and 356. A Phosphotyrosine modification is found at Tyr-357.

Belongs to the protein kinase superfamily. AGC Ser/Thr protein kinase family. Activated by phosphorylation on Ser-356 by an unknown kinase (may be mTORC2 but not confirmed), transforming it into a substrate for PDPK1 which then phosphorylates it on Thr-193. As to expression, expressed in the proximal tubule and thick ascending limb of the loop of Henle (TALH).

It is found in the cytoplasm. It localises to the nucleus. It carries out the reaction L-seryl-[protein] + ATP = O-phospho-L-seryl-[protein] + ADP + H(+). It catalyses the reaction L-threonyl-[protein] + ATP = O-phospho-L-threonyl-[protein] + ADP + H(+). With respect to regulation, two specific sites, one in the kinase domain (Thr-193) and the other in the C-terminal regulatory region (Ser-356), need to be phosphorylated for its full activation. In terms of biological role, serine/threonine-protein kinase which is involved in the regulation of a wide variety of ion channels, membrane transporters, cell growth, survival and proliferation. Up-regulates Na(+) channels: SCNN1A/ENAC, K(+) channels: KCNA3/Kv1.3, KCNE1 and KCNQ1, amino acid transporter: SLC6A19, glutamate transporter: SLC1A6/EAAT4, glutamate receptors: GRIA1/GLUR1 and GRIK2/GLUR6, Na(+)/H(+) exchanger: SLC9A3/NHE3, and the Na(+)/K(+) ATPase. This is Serine/threonine-protein kinase Sgk2 (Sgk2) from Rattus norvegicus (Rat).